The primary structure comprises 118 residues: Holo-[acyl-carrier-protein] synthase (118 aa).

Asp9 and Glu52 together coordinate Mg(2+).

It belongs to the P-Pant transferase superfamily. AcpS family. Mg(2+) is required as a cofactor.

The protein resides in the cytoplasm. The enzyme catalyses apo-[ACP] + CoA = holo-[ACP] + adenosine 3',5'-bisphosphate + H(+). Functionally, transfers the 4'-phosphopantetheine moiety from coenzyme A to a Ser of acyl-carrier-protein. The chain is Holo-[acyl-carrier-protein] synthase from Frankia alni (strain DSM 45986 / CECT 9034 / ACN14a).